Consider the following 778-residue polypeptide: Serine/threonine-protein kinase BRSK1 (778 aa).

A compositionally biased stretch (gly residues) spans 1-12; it reads MSSGSKEGGGGS. The tract at residues 1–29 is disordered; that stretch reads MSSGSKEGGGGSPAYHLPHPHPHPPQHAQ. The Protein kinase domain occupies 34–285; that stretch reads YRLEKTLGKG…LEQIQKHPWY (252 aa). ATP-binding positions include 40–48 and Lys63; that span reads LGKGQTGLV. Catalysis depends on Asp156, which acts as the Proton acceptor. Phosphothreonine; by LKB1 is present on Thr189. The UBA domain maps to 314-356; that stretch reads ELDPDVLESMASLGCFRDRERLHRELRSEEENQEKMIYYLLLD. Basic and acidic residues predominate over residues 362–383; sequence PSCEDQDLPPRNDVDPPRKRVD. The disordered stretch occupies residues 362–548; it reads PSCEDQDLPP…SPGGGVGGAA (187 aa). Phosphoserine is present on residues Ser399, Ser443, Ser447, and Ser450. Low complexity predominate over residues 430-457; it reads SRSVSGASTGLSSSPLSSPRSPVFSFSP. Omega-N-methylarginine occurs at positions 466, 481, 484, and 498. The segment covering 491-508 has biased composition (pro residues); that stretch reads QPPPPSARSTPLPGPPGS. Ser508 carries the phosphoserine modification. A compositionally biased stretch (low complexity) spans 509-533; sequence PRSSGGTPLHSPLHTPRASPTGTPG. Arg525 carries the omega-N-methylarginine modification. Phosphothreonine is present on residues Thr529 and Thr535. Arg550 is modified (omega-N-methylarginine). The disordered stretch occupies residues 560-588; that stretch reads FLGSPRFHRRKMQVPTAEEMSSLTPESSP. At Thr583 the chain carries Phosphothreonine. Phosphoserine is present on residues Ser586, Ser587, and Ser601. The tract at residues 719 to 778 is disordered; it reads QPSVQALADEKNGAQTRPAGTPPRSLQPPPGRSDPDLSSSPRRGPPKDKKLLATNGTPLP.

It belongs to the protein kinase superfamily. CAMK Ser/Thr protein kinase family. SNF1 subfamily. Mg(2+) serves as cofactor. In terms of processing, phosphorylated at Thr-189 by STK11/LKB1 in complex with STE20-related adapter-alpha (STRADA) pseudo kinase and CAB39. Not phosphorylated at Thr-189 by CaMKK2. In contrast, it is phosphorylated and activated by CaMKK1. May be inactivated via dephosphorylation of Thr-189 by PP2C. Present in the gray matter of the brain and spinal cord (at protein level). Expressed in the nervous system, distributed within the brain and spinal cord of embryonic and postnatal animals.

The protein resides in the cytoplasm. The protein localises to the nucleus. It is found in the cytoskeleton. It localises to the microtubule organizing center. Its subcellular location is the centrosome. The protein resides in the synapse. The protein localises to the presynaptic active zone. It is found in the cytoplasmic vesicle. It localises to the secretory vesicle. Its subcellular location is the synaptic vesicle. It carries out the reaction L-seryl-[protein] + ATP = O-phospho-L-seryl-[protein] + ADP + H(+). It catalyses the reaction L-threonyl-[protein] + ATP = O-phospho-L-threonyl-[protein] + ADP + H(+). The catalysed reaction is L-seryl-[tau protein] + ATP = O-phospho-L-seryl-[tau protein] + ADP + H(+). The enzyme catalyses L-threonyl-[tau protein] + ATP = O-phospho-L-threonyl-[tau protein] + ADP + H(+). Its activity is regulated as follows. Activated by phosphorylation on Thr-189 by STK11/LKB1. In terms of biological role, serine/threonine-protein kinase that plays a key role in polarization of neurons and centrosome duplication. Phosphorylates CDC25B, CDC25C, MAPT/TAU, RIMS1, TUBG1, TUBG2 and WEE1. Following phosphorylation and activation by STK11/LKB1, acts as a key regulator of polarization of cortical neurons, probably by mediating phosphorylation of microtubule-associated proteins such as MAPT/TAU at 'Thr-504' and 'Ser-554'. Also regulates neuron polarization by mediating phosphorylation of WEE1 at 'Ser-642' in postmitotic neurons, leading to down-regulate WEE1 activity in polarized neurons. In neurons, localizes to synaptic vesicles and plays a role in neurotransmitter release, possibly by phosphorylating RIMS1. Also acts as a positive regulator of centrosome duplication by mediating phosphorylation of gamma-tubulin (TUBG1 and TUBG2) at 'Ser-131', leading to translocation of gamma-tubulin and its associated proteins to the centrosome. Involved in the UV-induced DNA damage checkpoint response, probably by inhibiting CDK1 activity through phosphorylation and activation of WEE1, and inhibition of CDC25B and CDC25C. In Mus musculus (Mouse), this protein is Serine/threonine-protein kinase BRSK1 (Brsk1).